Reading from the N-terminus, the 393-residue chain is MPHFLAKLDFKPLEYPLIEGDFCFHREFLSLKNPTKSCVYASFKDRIFLLQKIRRANDFLIKSEKATPLKREVLKQALRIYSQSFEVISHNLQENSKHASGKKTLDLGTFEDFIQKNQAPILIEIGFGSGRHLIELAKNNPTKTCLGIEIHTPSIAQALKQIELLDLKNLHILQGDGRLVLESMPNHRCEKIFVHFPVPWNEKKHRRVLSEKFLNEALRVLKPRGFLELRTDDSLYFEDSLKLALKNFQCEIEIKKNAQIPVVSKYEARWNKLKKDIYDLRIYSLEWNETPFDNHAFDFSFDTITISKKSVGTILKTKKIIQEGYFVHVCNIYENKGDFLVELSMGDFDWPVRLFVLLTENQIFYLNKSPLKTLNNHKAHLLLQNILSQKGIG.

S-adenosyl-L-methionine-binding residues include E124, E149, and D176. D232 is a substrate binding site.

It belongs to the class I-like SAM-binding methyltransferase superfamily. TrmB family.

The catalysed reaction is guanosine(46) in tRNA + S-adenosyl-L-methionine = N(7)-methylguanosine(46) in tRNA + S-adenosyl-L-homocysteine. Its pathway is tRNA modification; N(7)-methylguanine-tRNA biosynthesis. Functionally, catalyzes the formation of N(7)-methylguanine at position 46 (m7G46) in tRNA. The polypeptide is tRNA (guanine-N(7)-)-methyltransferase (Helicobacter pylori (strain ATCC 700392 / 26695) (Campylobacter pylori)).